A 921-amino-acid polypeptide reads, in one-letter code: Probable glucan 1,3-alpha-glucosidase (921 aa).

Residues 1-20 form the signal peptide; the sequence is MRSLLFVLSLICFCSQTALS. The Nucleophile role is filled by Asp512. The active site involves Glu515. Asp588 (proton donor) is an active-site residue. N-linked (GlcNAc...) asparagine glycosylation is found at Asn689 and Asn804.

Belongs to the glycosyl hydrolase 31 family. As to quaternary structure, heterodimer of a catalytic alpha subunit (PSL5) and a beta subunit (PSL4). In terms of tissue distribution, expressed in roots, rosette leaves, leaf blades, mature stems, cauline leaves, flower buds, flowers and siliques.

The protein localises to the endoplasmic reticulum. It carries out the reaction Hydrolysis of terminal (1-&gt;3)-alpha-D-glucosidic links in (1-&gt;3)-alpha-D-glucans.. It participates in glycan metabolism; N-glycan metabolism. Its function is as follows. Cleaves sequentially the 2 innermost alpha-1,3-linked glucose residues from the Glc(2)Man(9)GlcNAc(2) oligosaccharide precursor of immature glycoproteins. Essential for stable accumulation of the receptor EFR that determines the specific perception of bacterial elongation factor Tu (EF-Tu), a potent elicitor of the defense response to pathogen-associated molecular patterns (PAMPs). Required for sustained activation of EFR-mediated signaling, but not receptor FLS2-mediated signaling elicited by the bacterial flagellin flg22. In Arabidopsis thaliana (Mouse-ear cress), this protein is Probable glucan 1,3-alpha-glucosidase (PSL5).